A 397-amino-acid polypeptide reads, in one-letter code: MAPISLSWLLRLATFCHLTVLLAGQHHGVTKCNITCSKMTSKIPVALLIHYQQNQASCGKRAIILETRQHRLFCADPKEQWVKDAMQHLDRQAAALTRNGGTFEKQIGEVKPRTTPAAGGMDESVVLEPEATGESSSLEPTPSSQEAQRALGTSPELPTGVTGSSGTRLPPTPKAQDGGPVGTELFRVPPVSTAATWQSSAPHQPGPSLWAEAKTSEAPSTQDPSTQASTASSPAPEENAPSEGQRVWGQGQSPRPENSLEREEMGPVPAHTDAFQDWGPGSMAHVSVVPVSSEGTPSREPVASGSWTPKAEEPIHATMDPQRLGVLITPVPDAQAATRRQAVGLLAFLGLLFCLGVAMFTYQSLQGCPRKMAGEMAEGLRYIPRSCGSNSYVLVPV.

The N-terminal stretch at 1-24 (MAPISLSWLLRLATFCHLTVLLAG) is a signal peptide. The chemokine and involved in interaction with ITGAV:ITGB3 and ITGA4:ITGB1 stretch occupies residues 25-100 (QHHGVTKCNI…RQAAALTRNG (76 aa)). Residues 25 to 341 (QHHGVTKCNI…PDAQAATRRQ (317 aa)) lie on the Extracellular side of the membrane. Cystine bridges form between cysteine 32/cysteine 58 and cysteine 36/cysteine 74. Asparagine 33 is a glycosylation site (N-linked (GlcNAc...) asparagine). The segment at 101–341 (GTFEKQIGEV…PDAQAATRRQ (241 aa)) is mucin-like stalk. Disordered stretches follow at residues 128-265 (EPEA…REEM) and 289-309 (VPVSSEGTPSREPVASGSWTP). Residues 133–147 (GESSSLEPTPSSQEA) show a composition bias toward polar residues. The O-linked (GalNAc...) threonine glycan is linked to threonine 183. Over residues 193-202 (TAATWQSSAP) the composition is skewed to polar residues. Positions 219–243 (PSTQDPSTQASTASSPAPEENAPSE) are enriched in low complexity. Residue serine 253 is glycosylated (O-linked (GalNAc...) serine). Threonine 329 is a glycosylation site (O-linked (GalNAc...) threonine). Residues 342–362 (AVGLLAFLGLLFCLGVAMFTY) traverse the membrane as a helical segment. The Cytoplasmic segment spans residues 363-397 (QSLQGCPRKMAGEMAEGLRYIPRSCGSNSYVLVPV).

This sequence belongs to the intercrine delta family. Monomer. Forms a ternary complex with CX3CR1 and ITGAV:ITGB3 or ITGA4:ITGB1. As to quaternary structure, (Microbial infection) Interacts with pox virus crmD; this inhibits cell migration mediated by CX3CL1. In terms of assembly, (Microbial infection) Interacts (via N-terminus) with human cytomegalovirus (HHV-5) US28. (Microbial infection) Interacts with P.falciparum (strain 3D7) CBP1 and CBP2 (via their extracellular domains); the interaction mediates the adhesion of infected erythrocytes with endothelial cells. In terms of processing, a soluble short 95 kDa form may be released by proteolytic cleavage from the long membrane-anchored form. O-glycosylated with core 1 or possibly core 8 glycans. Expressed in the seminal plasma, endometrial fluid and follicular fluid (at protein level). Small intestine, colon, testis, prostate, heart, brain, lung, skeletal muscle, kidney and pancreas. Most abundant in the brain and heart.

The protein resides in the cell membrane. It is found in the secreted. Its function is as follows. Chemokine that acts as a ligand for both CX3CR1 and integrins ITGAV:ITGB3 and ITGA4:ITGB1. The CX3CR1-CX3CL1 signaling exerts distinct functions in different tissue compartments, such as immune response, inflammation, cell adhesion and chemotaxis. Regulates leukocyte adhesion and migration processes at the endothelium. Can activate integrins in both a CX3CR1-dependent and CX3CR1-independent manner. In the presence of CX3CR1, activates integrins by binding to the classical ligand-binding site (site 1) in integrins. In the absence of CX3CR1, binds to a second site (site 2) in integrins which is distinct from site 1 and enhances the binding of other integrin ligands to site 1. In terms of biological role, the soluble form is chemotactic for T-cells and monocytes, but not for neutrophils. The membrane-bound form promotes adhesion of those leukocytes to endothelial cells. Functionally, (Microbial infection) Mediates the cytoadherence of erythrocytes infected with parasite P.falciparum (strain 3D7) with endothelial cells by interacting with P.falciparum CBP1 and CBP2 expressed at the surface of erythrocytes. The adhesion prevents the elimination of infected erythrocytes by the spleen. In Homo sapiens (Human), this protein is Fractalkine.